We begin with the raw amino-acid sequence, 187 residues long: Inosine triphosphate pyrophosphatase (187 aa).

Residue 11–16 (TSNKNK) coordinates ITP. A Mg(2+)-binding site is contributed by Glu-39. ITP-binding positions include Lys-51, 67 to 68 (DT), Lys-84, 143 to 146 (FGWD), Lys-164, and 169 to 170 (HR).

The protein belongs to the HAM1 NTPase family. Homodimer. The cofactor is Mg(2+). Mn(2+) is required as a cofactor.

Its subcellular location is the cytoplasm. The protein resides in the nucleus. The catalysed reaction is ITP + H2O = IMP + diphosphate + H(+). It carries out the reaction dITP + H2O = dIMP + diphosphate + H(+). The enzyme catalyses XTP + H2O = XMP + diphosphate + H(+). Functionally, pyrophosphatase that hydrolyzes non-canonical purine nucleotides such as inosine triphosphate (ITP), deoxyinosine triphosphate (dITP) or xanthosine 5'-triphosphate (XTP) to their respective monophosphate derivatives. The enzyme does not distinguish between the deoxy- and ribose forms. Probably excludes non-canonical purines from RNA and DNA precursor pools, thus preventing their incorporation into RNA and DNA and avoiding chromosomal lesions. The polypeptide is Inosine triphosphate pyrophosphatase (Aspergillus fumigatus (strain ATCC MYA-4609 / CBS 101355 / FGSC A1100 / Af293) (Neosartorya fumigata)).